Reading from the N-terminus, the 193-residue chain is Protein GrpE (193 aa).

Basic and acidic residues predominate over residues 1-22 (MDPKEKEKMAEELNVEETKDTA). Positions 1–45 (MDPKEKEKMAEELNVEETKDTAEEQPQDDQAEEAAPLTHEEQLEK) are disordered. Residues 23-32 (EEQPQDDQAE) show a composition bias toward acidic residues.

The protein belongs to the GrpE family. As to quaternary structure, homodimer.

It localises to the cytoplasm. Functionally, participates actively in the response to hyperosmotic and heat shock by preventing the aggregation of stress-denatured proteins, in association with DnaK and GrpE. It is the nucleotide exchange factor for DnaK and may function as a thermosensor. Unfolded proteins bind initially to DnaJ; upon interaction with the DnaJ-bound protein, DnaK hydrolyzes its bound ATP, resulting in the formation of a stable complex. GrpE releases ADP from DnaK; ATP binding to DnaK triggers the release of the substrate protein, thus completing the reaction cycle. Several rounds of ATP-dependent interactions between DnaJ, DnaK and GrpE are required for fully efficient folding. The chain is Protein GrpE from Bacteroides thetaiotaomicron (strain ATCC 29148 / DSM 2079 / JCM 5827 / CCUG 10774 / NCTC 10582 / VPI-5482 / E50).